Here is a 404-residue protein sequence, read N- to C-terminus: Argininosuccinate synthase (404 aa).

ATP is bound by residues 10 to 18 (AFSGGLDTS) and Ala37. Residues Tyr88 and Ser93 each coordinate L-citrulline. An ATP-binding site is contributed by Gly118. Thr120, Asn124, and Asp125 together coordinate L-aspartate. Asn124 is a binding site for L-citrulline. L-citrulline contacts are provided by Arg128, Ser179, Ser188, Glu264, and Tyr276.

Belongs to the argininosuccinate synthase family. Type 1 subfamily. Homotetramer.

It is found in the cytoplasm. The catalysed reaction is L-citrulline + L-aspartate + ATP = 2-(N(omega)-L-arginino)succinate + AMP + diphosphate + H(+). It participates in amino-acid biosynthesis; L-arginine biosynthesis; L-arginine from L-ornithine and carbamoyl phosphate: step 2/3. The protein is Argininosuccinate synthase of Nitrosomonas europaea (strain ATCC 19718 / CIP 103999 / KCTC 2705 / NBRC 14298).